Consider the following 134-residue polypeptide: Retinol-binding protein 2 (134 aa).

Residues Lys41 and Gln109 each contribute to the all-trans-retinol site.

The protein belongs to the calycin superfamily. Fatty-acid binding protein (FABP) family. As to expression, higher expression in adult small intestine and to a much lesser extent in fetal kidney.

The protein localises to the cytoplasm. In terms of biological role, intracellular transport of retinol. The sequence is that of Retinol-binding protein 2 (RBP2) from Homo sapiens (Human).